A 325-amino-acid polypeptide reads, in one-letter code: Probable arylamine N-acetyltransferase 1 (325 aa).

Cysteine 72 serves as the catalytic Acyl-thioester intermediate. Catalysis depends on residues histidine 112 and aspartate 127.

This sequence belongs to the arylamine N-acetyltransferase family.

The enzyme catalyses an arylamine + acetyl-CoA = an N-acetylarylamine + CoA. This Dictyostelium discoideum (Social amoeba) protein is Probable arylamine N-acetyltransferase 1.